Reading from the N-terminus, the 428-residue chain is MTTITQKYEEAKEKYASIDVDTEAVLEKMADVKISMHVWQGDDVRGFLSEDELSGGISVTGNYPGVARSPQQLRQDLEKAFSLIPGKHKLNLHAIYLDTEERVDLNELEPKHFEPWVTWAKENGLGLDFNPTFFSHPMYRDGFTLAHPNPQVRDFWIEHGKRSRRIAEYFGRELGQVAVNNFWVPDGFKDNPVDRLTPRKRLMASLDEIFSEEIDPAYTVDAMESKLFGIGSEAYTVGSHEFYMGYGLTRNKLICLDAGHFHPTEVISNKLSSLSLFGEGMLLHVSRPVRWDSDHVVIMDDELQEIAKELVRNDLLGKTHVGLDFFDATINRVAAWVIGTRNTQKALMKAMLEPTNVLKEAELIGDFTTRLALTEELKDFPFADIWNYYCQENHVPIGLDWLTDVQEYEKVILPTRQLPTGKDSCRFS.

Mn(2+)-binding residues include H260, D292, and D294.

It belongs to the rhamnose isomerase family. The cofactor is Mn(2+).

The protein resides in the cytoplasm. It catalyses the reaction L-rhamnopyranose = L-rhamnulose. The protein operates within carbohydrate degradation; L-rhamnose degradation; glycerone phosphate from L-rhamnose: step 1/3. In terms of biological role, catalyzes the interconversion of L-rhamnose and L-rhamnulose. This Enterococcus faecalis (strain ATCC 700802 / V583) protein is L-rhamnose isomerase.